The primary structure comprises 114 residues: Putative cysteine proteinase inhibitor 9 (114 aa).

The first 23 residues, 1 to 23, serve as a signal peptide directing secretion; it reads MRTSSLVLFAAVAVFGAACTAAA.

The protein belongs to the cystatin family. Phytocystatin subfamily.

It is found in the secreted. Functionally, specific inhibitor of cysteine proteinases. Probably involved in the regulation of endogenous processes and in defense against pests and pathogens. This is Putative cysteine proteinase inhibitor 9 from Oryza sativa subsp. japonica (Rice).